The primary structure comprises 434 residues: Acyl transferase 15 (434 aa).

Residues His-164 and Asp-371 each act as proton acceptor in the active site.

This sequence belongs to the plant acyltransferase family.

Its function is as follows. Involved in the incorporation of ferulate into the cell wall. The chain is Acyl transferase 15 from Oryza sativa subsp. japonica (Rice).